We begin with the raw amino-acid sequence, 317 residues long: tRNA(Met) cytidine acetate ligase (317 aa).

ATP contacts are provided by residues 6 to 19, Gly100, Asn157, and Arg182; that span reads IAEY…HIYQ.

This sequence belongs to the TmcAL family.

The protein localises to the cytoplasm. It catalyses the reaction cytidine(34) in elongator tRNA(Met) + acetate + ATP = N(4)-acetylcytidine(34) in elongator tRNA(Met) + AMP + diphosphate. Functionally, catalyzes the formation of N(4)-acetylcytidine (ac(4)C) at the wobble position of elongator tRNA(Met), using acetate and ATP as substrates. First activates an acetate ion to form acetyladenylate (Ac-AMP) and then transfers the acetyl group to tRNA to form ac(4)C34. The protein is tRNA(Met) cytidine acetate ligase of Mesomycoplasma hyopneumoniae (strain 232) (Mycoplasma hyopneumoniae).